The chain runs to 398 residues: 2-epi-5-epi-valiolone synthase (398 aa).

NAD(+) is bound by residues D62, 93-96, 126-130, 150-151, K163, K172, and 190-193; these read ETVK, GVLMD, TT, and FLAT. K163 is an active-site residue. Positions 205, 276, and 292 each coordinate a divalent metal cation.

Belongs to the sugar phosphate cyclases superfamily. EEVS family. NAD(+) is required as a cofactor. It depends on Co(2+) as a cofactor.

It carries out the reaction D-sedoheptulose 7-phosphate = 2-epi-5-epi-valiolone + phosphate. Catalyzes the cyclization of D-sedoheptulose 7-phosphate to 2-epi-5-epi-valiolone. Does not use ido-heptulose 7-phosphate and 3-deoxy-arabino-heptulosonate 7-phosphate. Involved in the biosynthesis of the acarviose moiety of the alpha-glucosidase inhibitor acarbose. This Actinoplanes sp. (strain ATCC 31044 / CBS 674.73 / SE50/110) protein is 2-epi-5-epi-valiolone synthase.